The following is a 448-amino-acid chain: Glutamyl-tRNA reductase (448 aa).

Substrate is bound by residues 52–55 (TCNR), S105, 110–112 (EDQ), and Q116. C53 acts as the Nucleophile in catalysis. 184-189 (GAGEMG) contacts NADP(+). Residues 406–435 (DPDFGGPDQATPPEFTKGMSVEDIPDGMRD) are disordered.

It belongs to the glutamyl-tRNA reductase family. Homodimer.

It carries out the reaction (S)-4-amino-5-oxopentanoate + tRNA(Glu) + NADP(+) = L-glutamyl-tRNA(Glu) + NADPH + H(+). The protein operates within porphyrin-containing compound metabolism; protoporphyrin-IX biosynthesis; 5-aminolevulinate from L-glutamyl-tRNA(Glu): step 1/2. In terms of biological role, catalyzes the NADPH-dependent reduction of glutamyl-tRNA(Glu) to glutamate 1-semialdehyde (GSA). This Haloarcula marismortui (strain ATCC 43049 / DSM 3752 / JCM 8966 / VKM B-1809) (Halobacterium marismortui) protein is Glutamyl-tRNA reductase.